Consider the following 343-residue polypeptide: Ribosomal RNA small subunit methyltransferase C (343 aa).

Belongs to the methyltransferase superfamily. RsmC family. In terms of assembly, monomer.

The protein resides in the cytoplasm. The catalysed reaction is guanosine(1207) in 16S rRNA + S-adenosyl-L-methionine = N(2)-methylguanosine(1207) in 16S rRNA + S-adenosyl-L-homocysteine + H(+). In terms of biological role, specifically methylates the guanine in position 1207 of 16S rRNA in the 30S particle. This chain is Ribosomal RNA small subunit methyltransferase C, found in Shigella sonnei (strain Ss046).